Reading from the N-terminus, the 537-residue chain is Beta-1-syntrophin (537 aa).

An N-acetylalanine modification is found at Ala2. PH domains are found at residues 18 to 297 and 321 to 432; these read RAQR…SNAG and EIRH…QGCH. Phosphoserine occurs at positions 86, 125, and 204. Positions 111–194 constitute a PDZ domain; the sequence is GVKVLKQELG…EVLLEVKYMR (84 aa). A disordered region spans residues 204–233; the sequence is SPVSEIGWETPPPESPRLGGGSAEPLSSQS. Thr213 carries the phosphothreonine modification. Phosphoserine occurs at positions 218, 225, 231, 235, and 388. An SU domain is found at 481–537; that stretch reads PYEKLKMSSDDGIRMLYLDFGGKEGEIQLDLHSCPKPIVFIIHSFLSAKITRLGLVA. The calmodulin-binding stretch occupies residues 517-537; it reads PIVFIIHSFLSAKITRLGLVA.

It belongs to the syntrophin family. In terms of assembly, monomer and homodimer. Interacts with the viral HTLV-1 TAX protein and other members of the syntrophin family: SNTA1 and SNTB2. Interacts with the dystrophin protein DMD and related proteins DTNA and UTRN and with the sodium channel proteins SCN4A and SCN5A. Interacts with DTNB. Phosphorylated by CaM-kinase II. As to expression, ubiquitous. Expressed at high levels in the liver.

It localises to the cell membrane. The protein localises to the sarcolemma. The protein resides in the cell junction. Its subcellular location is the cytoplasm. It is found in the cytoskeleton. Its function is as follows. Adapter protein that binds to and probably organizes the subcellular localization of a variety of membrane proteins. May link various receptors to the actin cytoskeleton and the dystrophin glycoprotein complex. The sequence is that of Beta-1-syntrophin (Sntb1) from Mus musculus (Mouse).